Reading from the N-terminus, the 154-residue chain is UPF0178 protein SPO3827 (154 aa).

It belongs to the UPF0178 family.

This is UPF0178 protein SPO3827 from Ruegeria pomeroyi (strain ATCC 700808 / DSM 15171 / DSS-3) (Silicibacter pomeroyi).